The sequence spans 343 residues: Ribosomal RNA small subunit methyltransferase C (343 aa).

Belongs to the methyltransferase superfamily. RsmC family. Monomer.

It localises to the cytoplasm. The enzyme catalyses guanosine(1207) in 16S rRNA + S-adenosyl-L-methionine = N(2)-methylguanosine(1207) in 16S rRNA + S-adenosyl-L-homocysteine + H(+). Specifically methylates the guanine in position 1207 of 16S rRNA in the 30S particle. The protein is Ribosomal RNA small subunit methyltransferase C of Escherichia coli O81 (strain ED1a).